Reading from the N-terminus, the 299-residue chain is Protoheme IX farnesyltransferase (299 aa).

Helical transmembrane passes span 25–45 (VVVLMLITSLVGMFLASRAGV), 47–67 (WTVLLFGNLGIGLCAGAAAAV), 95–115 (LAALGFALALAVAGMALLLTF), 119–139 (LAAWLTLASLLGYAVLYTGFL), 147–167 (IVIGGLAGAAPPLLGWVAVSG), 173–193 (PLLLVLIVFTWTPPHFWALAI), 218–238 (LHILLYTLALLAVTLLPYAIH), 243–263 (LYLLCALLLGGRFLHWAWALY), and 279–299 (IRYLFLLFIALLVDHYLPLTL).

The protein belongs to the UbiA prenyltransferase family. Protoheme IX farnesyltransferase subfamily.

The protein resides in the cell inner membrane. The enzyme catalyses heme b + (2E,6E)-farnesyl diphosphate + H2O = Fe(II)-heme o + diphosphate. The protein operates within porphyrin-containing compound metabolism; heme O biosynthesis; heme O from protoheme: step 1/1. Functionally, converts heme B (protoheme IX) to heme O by substitution of the vinyl group on carbon 2 of heme B porphyrin ring with a hydroxyethyl farnesyl side group. In Azotobacter vinelandii (strain DJ / ATCC BAA-1303), this protein is Protoheme IX farnesyltransferase.